A 276-amino-acid chain; its full sequence is Protein G1 (276 aa).

Disordered stretches follow at residues 1 to 30 and 178 to 213; these read MSSSSAAALGSDDGCSPAELRPSRYESQKR and SYHKKKKRRGGNMNGARGGGGGGARAGVNDGDATAP. Positions 21 to 30 are enriched in basic and acidic residues; it reads RPSRYESQKR. Residues 24–183 form the ALOG domain; sequence RYESQKRRDW…ARGISYHKKK (160 aa). Positions 178–187 are enriched in basic residues; it reads SYHKKKKRRG. The Nuclear localization signal motif lies at 181–185; the sequence is KKKKR. The segment covering 189–202 has biased composition (gly residues); that stretch reads NMNGARGGGGGGAR. The segment covering 203–213 has biased composition (low complexity); it reads AGVNDGDATAP.

It belongs to the plant homeotic and developmental regulators ALOG protein family. Expressed at the empty glumes of immature spikelets, which are lemmas of the sterile florets located at the lateral side of the spikelet, throughout their development.

The protein localises to the nucleus. Probable transcription regulator that acts as a developmental regulator by promoting cell growth in response to light. Transcription regulator that restrains empty glumes growth, lemmas of the sterile florets located at the lateral side of the rice spikelet, to maintain their small size, probably by repressing lemma identity via transcription regulation. This Oryza sativa subsp. japonica (Rice) protein is Protein G1 (G1).